We begin with the raw amino-acid sequence, 441 residues long: Plasmepsin VI (441 aa).

The Cytoplasmic segment spans residues 1–7; sequence MTNFCIK. The helical; Signal-anchor for type II membrane protein transmembrane segment at 8 to 28 threads the bilayer; the sequence is SYLFLYLSFLLFFDIITIFHV. Over 29 to 441 the chain is Extracellular; sequence SSIRISTVLK…VGVVKSNHNF (413 aa). In terms of domain architecture, Peptidase A1 spans 109–435; it reads FIGDIEIGNP…DNDHKLVGVV (327 aa). Catalysis depends on residues aspartate 127 and aspartate 324.

This sequence belongs to the peptidase A1 family.

It is found in the membrane. In terms of biological role, during the development in the mosquito midgut, plays a role in sporozoite egress from oocysts. The sequence is that of Plasmepsin VI from Plasmodium berghei (strain Anka).